The sequence spans 434 residues: Eukaryotic translation initiation factor 3 subunit E (434 aa).

In terms of domain architecture, PCI spans 219–392 (FFNHPKGRDL…GHVVMGTQPL (174 aa)).

It belongs to the eIF-3 subunit E family. Component of the eukaryotic translation initiation factor 3 (eIF-3) complex. The eIF-3 complex interacts with pix. Interacts with mxt.

Its subcellular location is the cytoplasm. In terms of biological role, component of the eukaryotic translation initiation factor 3 (eIF-3) complex, which is involved in protein synthesis of a specialized repertoire of mRNAs and, together with other initiation factors, stimulates binding of mRNA and methionyl-tRNAi to the 40S ribosome. The eIF-3 complex specifically targets and initiates translation of a subset of mRNAs involved in cell proliferation. The sequence is that of Eukaryotic translation initiation factor 3 subunit E (eIF3-S6) from Drosophila virilis (Fruit fly).